The sequence spans 182 residues: Adenine phosphoribosyltransferase (182 aa).

This sequence belongs to the purine/pyrimidine phosphoribosyltransferase family. In terms of assembly, homodimer.

The protein localises to the cytoplasm. The enzyme catalyses AMP + diphosphate = 5-phospho-alpha-D-ribose 1-diphosphate + adenine. Its pathway is purine metabolism; AMP biosynthesis via salvage pathway; AMP from adenine: step 1/1. Its function is as follows. Catalyzes a salvage reaction resulting in the formation of AMP, that is energically less costly than de novo synthesis. The sequence is that of Adenine phosphoribosyltransferase from Campylobacter hominis (strain ATCC BAA-381 / DSM 21671 / CCUG 45161 / LMG 19568 / NCTC 13146 / CH001A).